The primary structure comprises 187 residues: UPF0398 protein LJ_1195 (187 aa).

It belongs to the UPF0398 family.

The sequence is that of UPF0398 protein LJ_1195 from Lactobacillus johnsonii (strain CNCM I-12250 / La1 / NCC 533).